The sequence spans 75 residues: Beta-defensin 42 (75 aa).

A signal peptide spans 1–21; that stretch reads MNLRLSCLLFILVTSLPAGRC. 3 cysteine pairs are disulfide-bonded: Cys-33–Cys-60, Cys-40–Cys-54, and Cys-44–Cys-61.

The protein belongs to the beta-defensin family. Epididymis-specific, with highest levels in the initial segment and distal caput.

Its subcellular location is the secreted. Its function is as follows. Has bactericidal activity. May play a role in the antimicrobial protection of sperm and urogenital tract epithelia. The protein is Beta-defensin 42 of Mus musculus (Mouse).